Here is an 86-residue protein sequence, read N- to C-terminus: Omega-theraphotoxin-Hhn1f 1 (86 aa).

The N-terminal stretch at 1–21 (MKSIVFVALFGLALLAVVCSA) is a signal peptide. Positions 22-50 (SEDAHKELLKEVVRAMVVDKTDAVQAEER) are excised as a propeptide. Cystine bridges form between Cys52–Cys66, Cys59–Cys71, and Cys65–Cys78.

It belongs to the neurotoxin 10 (Hwtx-1) family. 17 (Hntx-9) subfamily. As to expression, expressed by the venom gland.

It is found in the secreted. Ion channel inhibitor. This is Omega-theraphotoxin-Hhn1f 1 from Cyriopagopus hainanus (Chinese bird spider).